The primary structure comprises 197 residues: Imidazoleglycerol-phosphate dehydratase (197 aa).

This sequence belongs to the imidazoleglycerol-phosphate dehydratase family.

It localises to the cytoplasm. The enzyme catalyses D-erythro-1-(imidazol-4-yl)glycerol 3-phosphate = 3-(imidazol-4-yl)-2-oxopropyl phosphate + H2O. It participates in amino-acid biosynthesis; L-histidine biosynthesis; L-histidine from 5-phospho-alpha-D-ribose 1-diphosphate: step 6/9. The sequence is that of Imidazoleglycerol-phosphate dehydratase from Pseudomonas fluorescens (strain ATCC BAA-477 / NRRL B-23932 / Pf-5).